The following is a 729-amino-acid chain: Circadian input-output histidine kinase CikA (729 aa).

The interval 1-169 (MPQPIFDRIL…QVTTQIRQSL (169 aa)) is N-terminal domain. A GAF domain region spans residues 170 to 314 (ELPELLKIAV…VEFLTHLSQH (145 aa)). Residues 366–587 (TMSHELRTPL…TFTVGLPAIS (222 aa)) form the Histidine kinase domain. At H369 the chain carries Phosphohistidine; by autocatalysis. A psR domain, binds KaiB region spans residues 613-729 (EGRIVLVSED…GLTSLATSAQ (117 aa)).

This sequence in the N-terminal section; belongs to the phytochrome family. Homodimer. Part of the circadian clock (KaiA, KaiB, KaiC, CikA, RpaA, SasA), the composition of which varies during the circadian cycle. KaiA and CikA compete for binding to KaiB(fs). The PsR domain binds the KaiB:KaiC CI complex but poorly to either protein alone. KaiA and CikA bind to the same region of the KaiB(fs) form and therefore compete.

It carries out the reaction ATP + protein L-histidine = ADP + protein N-phospho-L-histidine.. Functions in an input pathway to the Kai circadian clock. Senses oxidized quinones via its C-terminal pseudo-receiver domain, providing a link between cell metabolism and the clock. Affects the ratio of phosphorylated to unphosphorylated KaiC, binds quinones via its pseudo-receptor domain. Quinone-binding destabilizes the protein rapidly. Autophosphorylates, does not transfer the phosphate to its pseudo-receiver (PsR) domain. May play a role in cell division. In terms of biological role, also functions in a two-component CikA/RpaA output pathway from the circadian clock, negatively regulating kaiBC expression independently of labA and of sasA. One of three clock output pathways. Dephosphorylates phospho-RpaA, enhanced by KaiB and KaiC, has only modest kinase activity on RpaA. This chain is Circadian input-output histidine kinase CikA, found in Thermosynechococcus vestitus (strain NIES-2133 / IAM M-273 / BP-1).